The following is a 152-amino-acid chain: Heavy metal-associated isoprenylated plant protein 20 (152 aa).

One can recognise an HMA domain in the interval 27 to 90 (MQTVNIKVKM…RIERTGKKAE (64 aa)). 2 residues coordinate Cd(2+): C38 and C41. C149 carries the post-translational modification Cysteine methyl ester. A lipid anchor (S-farnesyl cysteine) is attached at C149. A propeptide spans 150 to 152 (TVM) (removed in mature form).

This sequence belongs to the HIPP family. As to quaternary structure, interacts with ZHD11/HB29. As to expression, expressed in roots, shoot apical meristem, leaves and flowers.

Its subcellular location is the membrane. In terms of biological role, heavy-metal-binding protein. Binds cadmium. May be involved in cadmium transport and play a role in cadmium detoxification. In Arabidopsis thaliana (Mouse-ear cress), this protein is Heavy metal-associated isoprenylated plant protein 20.